Consider the following 106-residue polypeptide: Small ribosomal subunit protein bS16 (106 aa).

This sequence belongs to the bacterial ribosomal protein bS16 family.

This is Small ribosomal subunit protein bS16 from Protochlamydia amoebophila (strain UWE25).